A 247-amino-acid chain; its full sequence is Killer cell lectin-like receptor subfamily I member 2 (247 aa).

Residues 1–12 show a composition bias toward basic and acidic residues; that stretch reads MPRKKQNERGTN. Residues 1 to 39 are disordered; that stretch reads MPRKKQNERGTNKQEIINIETKSSTFQEKQRQSKTDQIS. Topologically, residues 1-79 are cytoplasmic; the sequence is MPRKKQNERG…GTDPWLTTWR (79 aa). A helical membrane pass occupies residues 80-100; it reads IITVILGTSCIILVTKVGFLI. Residues 101–247 are Extracellular-facing; that stretch reads PNLFSRGEKR…KAYTCEFNLQ (147 aa). 4 N-linked (GlcNAc...) asparagine glycosylation sites follow: Asn-125, Asn-196, Asn-212, and Asn-218. The region spanning 139–243 is the C-type lectin domain; sequence FGNNFYLFFR…CSSKKAYTCE (105 aa). Disulfide bonds link Cys-160–Cys-242 and Cys-221–Cys-234.

In terms of assembly, heterodimer with KLRE1. Expressed in natural killer (NK) cells.

The protein localises to the cell membrane. Lectin-like receptor for natural killer (NK) cells. Heterodimer formation with KLRE1 mediates NK cell cytolytic activity. In Rattus norvegicus (Rat), this protein is Killer cell lectin-like receptor subfamily I member 2.